The primary structure comprises 1015 residues: Translation initiation factor IF-2 (1015 aa).

4 disordered regions span residues 124-144 (EKEPVKEEPKPQPVAAEEKKV), 159-179 (EVTVTPATSEPKPVKEEPKPV), 196-230 (KKEEPKVVVSPEKTEKKEEKPVAEAPVTPVEKEEE), and 250-386 (IDLA…VSEE). Basic and acidic residues-rich tracts occupy residues 196–217 (KKEEPKVVVSPEKTEKKEEKPV) and 265–315 (SKEE…DPNG). One can recognise a tr-type G domain in the interval 514 to 684 (HRAPIVTVMG…LLEAEMLDLK (171 aa)). The segment at 523–530 (GHVDHGKT) is G1. Position 523–530 (523–530 (GHVDHGKT)) interacts with GTP. Positions 548–552 (GITQH) are G2. Residues 570 to 573 (DTPG) are G3. GTP contacts are provided by residues 570–574 (DTPGH) and 624–627 (NKID). Positions 624 to 627 (NKID) are G4. Positions 660–662 (SAK) are G5.

Belongs to the TRAFAC class translation factor GTPase superfamily. Classic translation factor GTPase family. IF-2 subfamily.

It is found in the cytoplasm. In terms of biological role, one of the essential components for the initiation of protein synthesis. Protects formylmethionyl-tRNA from spontaneous hydrolysis and promotes its binding to the 30S ribosomal subunits. Also involved in the hydrolysis of GTP during the formation of the 70S ribosomal complex. In Bacteroides fragilis (strain ATCC 25285 / DSM 2151 / CCUG 4856 / JCM 11019 / LMG 10263 / NCTC 9343 / Onslow / VPI 2553 / EN-2), this protein is Translation initiation factor IF-2.